We begin with the raw amino-acid sequence, 38 residues long: Large ribosomal subunit protein bL36 (38 aa).

It belongs to the bacterial ribosomal protein bL36 family.

The protein is Large ribosomal subunit protein bL36 (rpmJ) of Streptococcus pneumoniae serotype 4 (strain ATCC BAA-334 / TIGR4).